The chain runs to 189 residues: Peptidyl-tRNA hydrolase (189 aa).

Tyr17 contacts tRNA. His22 (proton acceptor) is an active-site residue. Phe65, Asn67, and Asn113 together coordinate tRNA.

Belongs to the PTH family. As to quaternary structure, monomer.

The protein localises to the cytoplasm. It carries out the reaction an N-acyl-L-alpha-aminoacyl-tRNA + H2O = an N-acyl-L-amino acid + a tRNA + H(+). In terms of biological role, hydrolyzes ribosome-free peptidyl-tRNAs (with 1 or more amino acids incorporated), which drop off the ribosome during protein synthesis, or as a result of ribosome stalling. Its function is as follows. Catalyzes the release of premature peptidyl moieties from peptidyl-tRNA molecules trapped in stalled 50S ribosomal subunits, and thus maintains levels of free tRNAs and 50S ribosomes. The polypeptide is Peptidyl-tRNA hydrolase (Mycoplasma genitalium (strain ATCC 33530 / DSM 19775 / NCTC 10195 / G37) (Mycoplasmoides genitalium)).